Here is a 225-residue protein sequence, read N- to C-terminus: MTTGADAATERQDKPGGKLFIRPWIFIRGVPAMKFLPPEGPPEVAFAGRSNVGKSSLINGLVGRKGLARTSNTPGRTQELNYFVPEGYSGEAGDLPPMALVDMPGYGFAKAPKAQVDAWTKLVFDYLRGRVTLKRVYLLIDARHGIKKIDEEVMDLLDSAAVSYQIVLTKADKIKSPAVTKLVAETGQKIVKRPAAFPEVIATSSEKGEGLEELRAAIVHAVTAG.

The 185-residue stretch at Gly40–Ala224 folds into the EngB-type G domain. GTP-binding positions include Gly48–Ser55, Gly75–Glu79, Asp102–Gly105, Thr169–Asp172, and Thr203–Ser205. Positions 55 and 77 each coordinate Mg(2+).

This sequence belongs to the TRAFAC class TrmE-Era-EngA-EngB-Septin-like GTPase superfamily. EngB GTPase family. It depends on Mg(2+) as a cofactor.

Functionally, necessary for normal cell division and for the maintenance of normal septation. In Chelativorans sp. (strain BNC1), this protein is Probable GTP-binding protein EngB.